The sequence spans 553 residues: Putative transport protein YidE (553 aa).

5 consecutive transmembrane segments (helical) span residues 4–24 (IALT…IGNV), 28–48 (GIGL…HFVS), 65–85 (FGLI…FFAS), 95–115 (LFAV…HKLF), and 158–178 (MSYA…MWML). 2 consecutive RCK C-terminal domains span residues 191–276 (QQHE…VIGQ) and 279–361 (DTSL…VLGN). 6 helical membrane-spanning segments follow: residues 371-391 (MLPV…PVFV), 393-413 (GFPA…ALIL), 439-459 (IVLF…NTLV), 464-484 (LSWI…VGIL), 493-513 (YLTM…LAFA), and 533-553 (LVMF…WSIG).

It belongs to the AAE transporter (TC 2.A.81) family. YidE subfamily.

Its subcellular location is the cell membrane. The polypeptide is Putative transport protein YidE (Escherichia coli (strain ATCC 8739 / DSM 1576 / NBRC 3972 / NCIMB 8545 / WDCM 00012 / Crooks)).